Consider the following 466-residue polypeptide: Asparagine--tRNA ligase (466 aa).

It belongs to the class-II aminoacyl-tRNA synthetase family. As to quaternary structure, homodimer.

It is found in the cytoplasm. The catalysed reaction is tRNA(Asn) + L-asparagine + ATP = L-asparaginyl-tRNA(Asn) + AMP + diphosphate + H(+). The polypeptide is Asparagine--tRNA ligase (Shigella dysenteriae serotype 1 (strain Sd197)).